A 946-amino-acid chain; its full sequence is Bifunctional glutamine synthetase adenylyltransferase/adenylyl-removing enzyme (946 aa).

An adenylyl removase region spans residues 1–440 (MKPLSSPLQQ…VFNELIGDDE (440 aa)). Residues 449-946 (SEQWRELWQD…ASWQKWLVEE (498 aa)) are adenylyl transferase.

It belongs to the GlnE family. Requires Mg(2+) as cofactor.

It catalyses the reaction [glutamine synthetase]-O(4)-(5'-adenylyl)-L-tyrosine + phosphate = [glutamine synthetase]-L-tyrosine + ADP. It carries out the reaction [glutamine synthetase]-L-tyrosine + ATP = [glutamine synthetase]-O(4)-(5'-adenylyl)-L-tyrosine + diphosphate. In terms of biological role, involved in the regulation of glutamine synthetase GlnA, a key enzyme in the process to assimilate ammonia. When cellular nitrogen levels are high, the C-terminal adenylyl transferase (AT) inactivates GlnA by covalent transfer of an adenylyl group from ATP to specific tyrosine residue of GlnA, thus reducing its activity. Conversely, when nitrogen levels are low, the N-terminal adenylyl removase (AR) activates GlnA by removing the adenylyl group by phosphorolysis, increasing its activity. The regulatory region of GlnE binds the signal transduction protein PII (GlnB) which indicates the nitrogen status of the cell. The sequence is that of Bifunctional glutamine synthetase adenylyltransferase/adenylyl-removing enzyme from Shigella dysenteriae serotype 1 (strain Sd197).